We begin with the raw amino-acid sequence, 352 residues long: MSASAAVATRHDWSLAEVRALFEQPFNDLLFQAQTVHRAYFDPNRVQVSTLLSIKTGACPEDCKYCPQSGHYNTGLDKEKLMEVQKVLEAAAEAKAIGSTRFCMGAAWKHPSAKDMPYVLEMVKGVKRLGLETCMTLGRLTQEQTQALADAGLDYYNHNLDTSPEFYGNIITTRTYGERLQTLAYVREAGMKICSGGILGMGESVDDRAGLLIQLANLPEHPESVPINMLVKVKGTPLAEEKDVDPFDFIRTLAVARIMMPKSHVRLSAGREQMNEQMQALAFMAGANSIFYGEKLLTTKNPQAEKDMQLFARLGIKPEEREEHADEVHQAAIEQALVEQRDSQLFYNAASA.

Residues 44-262 (NRVQVSTLLS…LAVARIMMPK (219 aa)) form the Radical SAM core domain. 3 residues coordinate [4Fe-4S] cluster: C59, C63, and C66. Residues C103, C134, C194, and R266 each coordinate [2Fe-2S] cluster.

It belongs to the radical SAM superfamily. Biotin synthase family. As to quaternary structure, homodimer. It depends on [4Fe-4S] cluster as a cofactor. The cofactor is [2Fe-2S] cluster.

The catalysed reaction is (4R,5S)-dethiobiotin + (sulfur carrier)-SH + 2 reduced [2Fe-2S]-[ferredoxin] + 2 S-adenosyl-L-methionine = (sulfur carrier)-H + biotin + 2 5'-deoxyadenosine + 2 L-methionine + 2 oxidized [2Fe-2S]-[ferredoxin]. Its pathway is cofactor biosynthesis; biotin biosynthesis; biotin from 7,8-diaminononanoate: step 2/2. Functionally, catalyzes the conversion of dethiobiotin (DTB) to biotin by the insertion of a sulfur atom into dethiobiotin via a radical-based mechanism. The polypeptide is Biotin synthase (Pseudomonas paraeruginosa (strain DSM 24068 / PA7) (Pseudomonas aeruginosa (strain PA7))).